Consider the following 348-residue polypeptide: D-alanine--D-alanine ligase (348 aa).

The region spanning 132–334 (KRVLESAGIA…YPDLIEKLVA (203 aa)) is the ATP-grasp domain. 162–217 (EEKLSYPVFTKPSNMGSSVGISKSDNQEELRASLDLAFKYDSRVLVEQGVTAREIE) is an ATP binding site. Positions 288, 301, and 303 each coordinate Mg(2+).

Belongs to the D-alanine--D-alanine ligase family. The cofactor is Mg(2+). Mn(2+) serves as cofactor.

It localises to the cytoplasm. It carries out the reaction 2 D-alanine + ATP = D-alanyl-D-alanine + ADP + phosphate + H(+). It participates in cell wall biogenesis; peptidoglycan biosynthesis. In terms of biological role, cell wall formation. In Streptococcus gordonii (strain Challis / ATCC 35105 / BCRC 15272 / CH1 / DL1 / V288), this protein is D-alanine--D-alanine ligase.